Reading from the N-terminus, the 290-residue chain is uncharacterized protein (290 aa).

Belongs to the UreD family.

It localises to the cytoplasm. It is found in the nucleus. Functionally, probably facilitates nickel incorporation. This is an uncharacterized protein from Schizosaccharomyces pombe (strain 972 / ATCC 24843) (Fission yeast).